A 243-amino-acid polypeptide reads, in one-letter code: Leucyl/phenylalanyl-tRNA--protein transferase (243 aa).

It belongs to the L/F-transferase family.

The protein resides in the cytoplasm. It carries out the reaction N-terminal L-lysyl-[protein] + L-leucyl-tRNA(Leu) = N-terminal L-leucyl-L-lysyl-[protein] + tRNA(Leu) + H(+). It catalyses the reaction N-terminal L-arginyl-[protein] + L-leucyl-tRNA(Leu) = N-terminal L-leucyl-L-arginyl-[protein] + tRNA(Leu) + H(+). The catalysed reaction is L-phenylalanyl-tRNA(Phe) + an N-terminal L-alpha-aminoacyl-[protein] = an N-terminal L-phenylalanyl-L-alpha-aminoacyl-[protein] + tRNA(Phe). Functionally, functions in the N-end rule pathway of protein degradation where it conjugates Leu, Phe and, less efficiently, Met from aminoacyl-tRNAs to the N-termini of proteins containing an N-terminal arginine or lysine. This chain is Leucyl/phenylalanyl-tRNA--protein transferase, found in Vibrio cholerae serotype O1 (strain ATCC 39541 / Classical Ogawa 395 / O395).